The sequence spans 90 residues: Probable Fe(2+)-trafficking protein (90 aa).

This sequence belongs to the Fe(2+)-trafficking protein family.

Its function is as follows. Could be a mediator in iron transactions between iron acquisition and iron-requiring processes, such as synthesis and/or repair of Fe-S clusters in biosynthetic enzymes. The polypeptide is Probable Fe(2+)-trafficking protein (Ectopseudomonas mendocina (strain ymp) (Pseudomonas mendocina)).